The sequence spans 182 residues: Tropomyosin-like protein (182 aa).

Positions 1–68 (FDRYNQILDE…ELEQRRTEQQ (68 aa)) form a coiled coil. The span at 32–66 (DEETKKIKQEEAEMKKKIEGEASRKKLELEQRRTE) shows a compositional bias: basic and acidic residues. Disordered regions lie at residues 32 to 81 (DEET…GSTD) and 140 to 160 (DQPAQAGPEPAAPAQEDDAGL). Low complexity predominate over residues 140-153 (DQPAQAGPEPAAPA).

Its subcellular location is the cytoplasm. It localises to the cytoskeleton. The protein is Tropomyosin-like protein of Pichia angusta (Yeast).